A 151-amino-acid polypeptide reads, in one-letter code: Methylglyoxal synthase (151 aa).

An MGS-like domain is found at 6 to 151 (RVMPAHKHIA…DYDAYLAERV (146 aa)). Substrate-binding positions include histidine 19, lysine 23, 45–48 (TGTT), and 65–66 (SG). The Proton donor/acceptor role is filled by aspartate 71. Histidine 98 contributes to the substrate binding site.

The protein belongs to the methylglyoxal synthase family.

It catalyses the reaction dihydroxyacetone phosphate = methylglyoxal + phosphate. Catalyzes the formation of methylglyoxal from dihydroxyacetone phosphate. The polypeptide is Methylglyoxal synthase (Aliivibrio fischeri (strain ATCC 700601 / ES114) (Vibrio fischeri)).